Consider the following 399-residue polypeptide: CLOCK-interacting pacemaker (399 aa).

A compositionally biased stretch (basic and acidic residues) spans 1-12 (MERKNSSRESPR). Disordered regions lie at residues 1 to 85 (MERK…AKNA) and 159 to 224 (SYTK…KLAE). Position 213 is a phosphoserine (Ser-213). The stretch at 333-359 (TLKTKELIRQNQATQVELDQLKEQTQL) forms a coiled coil. Polar residues predominate over residues 378 to 388 (SLTPGSSNTGS). The disordered stretch occupies residues 378–399 (SLTPGSSNTGSDLEAFSDHPDI).

Interacts with CLOCK. Forms a ternary complex with the CLOCK-BMAL1 heterodimer. Interacts with CAD and HSPA5.

Its subcellular location is the nucleus. The protein resides in the cytoplasm. It is found in the cytosol. Functionally, transcriptional repressor which may act as a negative-feedback regulator of CLOCK-BMAL1 transcriptional activity in the circadian-clock mechanism. May stimulate BMAL1-dependent phosphorylation of CLOCK. However, the physiological relevance of these observations is unsure, since experiments in knockout mice showed that CIPC is not critially required for basic circadian clock. This is CLOCK-interacting pacemaker (CIPC) from Pongo abelii (Sumatran orangutan).